A 496-amino-acid polypeptide reads, in one-letter code: Versicolorin B desaturase stcL (496 aa).

A helical membrane pass occupies residues 3–23; it reads FLSLPILTALGAVVYVLFQLV. Cysteine 440 lines the heme pocket.

Belongs to the cytochrome P450 family. Heme is required as a cofactor.

The protein resides in the membrane. It carries out the reaction versicolorin B + NADPH + O2 + H(+) = versicolorin A + NADP(+) + 2 H2O. The protein operates within mycotoxin biosynthesis; sterigmatocystin biosynthesis. Its function is as follows. Cytochrome P450 monooxygenase; part of the gene cluster that mediates the biosynthesis of sterigmatocystin (ST), a polyketide-derived furanocoumarin which is part of the most toxic and carcinogenic compounds among the known mycotoxins. The first step in the biosynthesis of sterigmatocystin is the production of hexanoate by the fatty acid synthase (FAS) units stcJ and stcK. The polyketide backbone is assembled by the non-reducing polyketide synthase stcA by condensation of the starter hexanoyl-CoA and 7 malonyl-CoA extender units followed by cyclization and release of norsolorinic acid. Norsolorinic acid is the first stable intermediate in the biosynthesis of sterigmatocystin and is converted into averantin (AVN) by the ketoreductase stcE which reduces the hexanoate ketone to an alcohol. Averantin is then oxidized into 5'-hydroxyaverantin (HAVN) by the cytochrome P450 monooxygenase stcF. 5'-hydroxyaverantin is further converted to 5'-oxyaverantin (OAVN) by the 5'-hydroxyaverantin dehydrogenase stcG. The next step is the conversion of OAVN into averufin (AVF) which is catalyzed by a yet to be identified enzyme. The cytochrome P450 monooxygenase stcB and the flavin-binding monooxygenase stcW are both required for the conversion of averufin to 1-hydroxyversicolorone. The esterase stcI probably catalyzes the formation of versiconal hemiacetal acetate from 1-hydroxyversicolorone. The oxydoreductase stcN then probably catalyzes the biosynthetic step from versiconal to versicolorin B (VERB). The next step is performed by the versicolorin B desaturase stcL to produce versicolorin A (VERA). The ketoreductase stcU and the cytochrome P450 monooxygenase stcS are involved in the conversion of versicolorin A to demethylsterigmatocystin. The Baeyer-Villiger oxidas stcQ and the reductase stcR might be involved in the biosynthetic step from versicolorin A to demethylsterigmatocystin. The final step in the biosynthesis of sterigmatocystin is the methylation of demethylsterigmatocystin catalyzed by the methyltransferase stcP. The chain is Versicolorin B desaturase stcL from Emericella nidulans (strain FGSC A4 / ATCC 38163 / CBS 112.46 / NRRL 194 / M139) (Aspergillus nidulans).